A 130-amino-acid polypeptide reads, in one-letter code: Large ribosomal subunit protein bL12 (130 aa).

The protein belongs to the bacterial ribosomal protein bL12 family. In terms of assembly, homodimer. Part of the ribosomal stalk of the 50S ribosomal subunit. Forms a multimeric L10(L12)X complex, where L10 forms an elongated spine to which 2 to 4 L12 dimers bind in a sequential fashion. Binds GTP-bound translation factors.

In terms of biological role, forms part of the ribosomal stalk which helps the ribosome interact with GTP-bound translation factors. Is thus essential for accurate translation. This is Large ribosomal subunit protein bL12 from Synechococcus sp. (strain RCC307).